The primary structure comprises 467 residues: UDP-N-acetylmuramoylalanine--D-glutamate ligase (467 aa).

ATP is bound at residue 118–124 (GTNGKTT).

It belongs to the MurCDEF family.

It is found in the cytoplasm. It catalyses the reaction UDP-N-acetyl-alpha-D-muramoyl-L-alanine + D-glutamate + ATP = UDP-N-acetyl-alpha-D-muramoyl-L-alanyl-D-glutamate + ADP + phosphate + H(+). Its pathway is cell wall biogenesis; peptidoglycan biosynthesis. Cell wall formation. Catalyzes the addition of glutamate to the nucleotide precursor UDP-N-acetylmuramoyl-L-alanine (UMA). The polypeptide is UDP-N-acetylmuramoylalanine--D-glutamate ligase (Streptomyces avermitilis (strain ATCC 31267 / DSM 46492 / JCM 5070 / NBRC 14893 / NCIMB 12804 / NRRL 8165 / MA-4680)).